The primary structure comprises 129 residues: Large ribosomal subunit protein bL21 (129 aa).

Positions Thr-102 to Ala-129 are disordered. Over residues Glu-116–Ala-129 the composition is skewed to basic and acidic residues.

This sequence belongs to the bacterial ribosomal protein bL21 family. In terms of assembly, part of the 50S ribosomal subunit. Contacts protein L20.

In terms of biological role, this protein binds to 23S rRNA in the presence of protein L20. The protein is Large ribosomal subunit protein bL21 of Bradyrhizobium diazoefficiens (strain JCM 10833 / BCRC 13528 / IAM 13628 / NBRC 14792 / USDA 110).